Here is a 462-residue protein sequence, read N- to C-terminus: Glycogen synthase 1 (462 aa).

Arg-6 is a binding site for ADP-alpha-D-glucose.

This sequence belongs to the glycosyltransferase 1 family. Bacterial/plant glycogen synthase subfamily.

The catalysed reaction is [(1-&gt;4)-alpha-D-glucosyl](n) + ADP-alpha-D-glucose = [(1-&gt;4)-alpha-D-glucosyl](n+1) + ADP + H(+). It participates in glycan biosynthesis; glycogen biosynthesis. Synthesizes alpha-1,4-glucan chains using ADP-glucose. The polypeptide is Glycogen synthase 1 (Bradyrhizobium diazoefficiens (strain JCM 10833 / BCRC 13528 / IAM 13628 / NBRC 14792 / USDA 110)).